The primary structure comprises 471 residues: Probable ribonuclease FAU-1 (471 aa).

Belongs to the FAU-1 family.

Functionally, probable RNase involved in rRNA stability through maturation and/or degradation of precursor rRNAs. Binds to RNA in loop regions with AU-rich sequences. In Aeropyrum pernix (strain ATCC 700893 / DSM 11879 / JCM 9820 / NBRC 100138 / K1), this protein is Probable ribonuclease FAU-1.